An 83-amino-acid chain; its full sequence is Small ribosomal subunit protein bS16 (83 aa).

The protein belongs to the bacterial ribosomal protein bS16 family.

In Shewanella frigidimarina (strain NCIMB 400), this protein is Small ribosomal subunit protein bS16.